The following is a 360-amino-acid chain: Phospho-N-acetylmuramoyl-pentapeptide-transferase (360 aa).

11 consecutive transmembrane segments (helical) span residues Leu-2–Leu-22, Ala-26–Arg-46, Thr-73–Leu-93, Tyr-97–Trp-117, Tyr-134–Leu-154, Ile-168–Ser-188, Gly-199–Ser-219, Thr-236–Phe-256, Val-263–Ile-283, Leu-288–Val-308, and Ile-339–Ile-359.

The protein belongs to the glycosyltransferase 4 family. MraY subfamily. Requires Mg(2+) as cofactor.

It is found in the cell inner membrane. The enzyme catalyses UDP-N-acetyl-alpha-D-muramoyl-L-alanyl-gamma-D-glutamyl-meso-2,6-diaminopimeloyl-D-alanyl-D-alanine + di-trans,octa-cis-undecaprenyl phosphate = di-trans,octa-cis-undecaprenyl diphospho-N-acetyl-alpha-D-muramoyl-L-alanyl-D-glutamyl-meso-2,6-diaminopimeloyl-D-alanyl-D-alanine + UMP. It functions in the pathway cell wall biogenesis; peptidoglycan biosynthesis. Its function is as follows. Catalyzes the initial step of the lipid cycle reactions in the biosynthesis of the cell wall peptidoglycan: transfers peptidoglycan precursor phospho-MurNAc-pentapeptide from UDP-MurNAc-pentapeptide onto the lipid carrier undecaprenyl phosphate, yielding undecaprenyl-pyrophosphoryl-MurNAc-pentapeptide, known as lipid I. The protein is Phospho-N-acetylmuramoyl-pentapeptide-transferase of Hahella chejuensis (strain KCTC 2396).